The primary structure comprises 37 residues: Large ribosomal subunit protein bL36c (37 aa).

Belongs to the bacterial ribosomal protein bL36 family.

The protein localises to the plastid. The protein resides in the chloroplast. In Lotus japonicus (Lotus corniculatus var. japonicus), this protein is Large ribosomal subunit protein bL36c.